The chain runs to 126 residues: Phosphoribosyl-AMP cyclohydrolase (126 aa).

Asp-73 contributes to the Mg(2+) binding site. Cys-74 contributes to the Zn(2+) binding site. Asp-75 and Asp-77 together coordinate Mg(2+). Zn(2+) contacts are provided by Cys-91 and Cys-98.

The protein belongs to the PRA-CH family. Homodimer. Mg(2+) is required as a cofactor. The cofactor is Zn(2+).

It localises to the cytoplasm. The catalysed reaction is 1-(5-phospho-beta-D-ribosyl)-5'-AMP + H2O = 1-(5-phospho-beta-D-ribosyl)-5-[(5-phospho-beta-D-ribosylamino)methylideneamino]imidazole-4-carboxamide. It participates in amino-acid biosynthesis; L-histidine biosynthesis; L-histidine from 5-phospho-alpha-D-ribose 1-diphosphate: step 3/9. Functionally, catalyzes the hydrolysis of the adenine ring of phosphoribosyl-AMP. This Solibacter usitatus (strain Ellin6076) protein is Phosphoribosyl-AMP cyclohydrolase.